Consider the following 162-residue polypeptide: UPF0114 protein PSEEN0819 (162 aa).

The next 3 membrane-spanning stretches (helical) occupy residues 15-35 (LLAP…LKFF), 53-73 (LVLV…LVMV), and 136-156 (LMWY…MGYL).

It belongs to the UPF0114 family.

It is found in the cell membrane. This chain is UPF0114 protein PSEEN0819, found in Pseudomonas entomophila (strain L48).